The following is a 94-amino-acid chain: Selenoprotein K (94 aa).

A helical transmembrane segment spans residues 20–42 (LSLITDFFWGIAEFVVLFFKTLL). The segment at 47 to 94 (KKGRGYRNSSDSRYDDGRGPPGNPPRRMGRISHLHGPSPPPMAGGUGR) is disordered. Residue Sec92 is a non-standard amino acid, selenocysteine.

This sequence belongs to the selenoprotein K family. As to quaternary structure, interacts with DERL1, DERL2, DERL3 and SELENOS. The SELENOK-SELENOS complex interacts with VCP. Interacts with ZDHHC6. In terms of processing, cleaved by CAPN2/m-calpain in resting macrophages but not in activated macrophages. Macrophage activation up-regulates expression of the calpain inhibitor CAST/calpastatin, resulting in inhibition of CAPN2 activity. Truncated SELENOK proteins produced by failed UGA/Sec decoding are ubiquitinated by the CRL2(KLHDC2) complex, which recognizes the diglycine (Gly-Gly) at the C-terminus of truncated SELENOK proteins.

Its subcellular location is the endoplasmic reticulum membrane. It localises to the cell membrane. Required for Ca(2+) flux in immune cells and plays a role in T-cell proliferation and in T-cell and neutrophil migration. Involved in endoplasmic reticulum-associated degradation (ERAD) of soluble glycosylated proteins. Required for palmitoylation and cell surface expression of CD36 and involved in macrophage uptake of low-density lipoprotein and in foam cell formation. Together with ZDHHC6, required for palmitoylation of ITPR1 in immune cells, leading to regulate ITPR1 stability and function. Plays a role in protection of cells from ER stress-induced apoptosis. Protects cells from oxidative stress when overexpressed in cardiomyocytes. The chain is Selenoprotein K from Chinchilla lanigera (Long-tailed chinchilla).